We begin with the raw amino-acid sequence, 883 residues long: Valine--tRNA ligase (883 aa).

Residues 46–56 carry the 'HIGH' region motif; sequence PNVTGKLHLGH. The short motif at 520 to 524 is the 'KMSKS' region element; sequence KMSKS. K523 is an ATP binding site. Residues 809–883 are a coiled coil; sequence LADLLNVEEE…RIDEMKKLVK (75 aa).

It belongs to the class-I aminoacyl-tRNA synthetase family. ValS type 1 subfamily. As to quaternary structure, monomer.

The protein resides in the cytoplasm. The catalysed reaction is tRNA(Val) + L-valine + ATP = L-valyl-tRNA(Val) + AMP + diphosphate. Catalyzes the attachment of valine to tRNA(Val). As ValRS can inadvertently accommodate and process structurally similar amino acids such as threonine, to avoid such errors, it has a 'posttransfer' editing activity that hydrolyzes mischarged Thr-tRNA(Val) in a tRNA-dependent manner. The protein is Valine--tRNA ligase of Streptococcus pneumoniae serotype 4 (strain ATCC BAA-334 / TIGR4).